We begin with the raw amino-acid sequence, 96 residues long: Carboxysome shell protein CsoS1A (96 aa).

A BMC domain is found at 7–92 (ALGMIETRGL…PHKEVEPVLT (86 aa)).

This sequence belongs to the bacterial microcompartments protein family. CsoS1 subfamily. Homohexamer with a small central pore. Forms a CsoS2-CsoS1-RuBisCO complex.

It localises to the carboxysome. One of shell proteins of the carboxysome, a polyhedral inclusion where RuBisCO (ribulose bisphosphate carboxylase, ccbL-ccbS) is sequestered. Assembles into hexamers which make sheets that form the facets of the polyhedral carboxysome. The shell probably limits the diffusion of CO(2) into and out of the carboxysome. The protein is Carboxysome shell protein CsoS1A of Hydrogenovibrio crunogenus (strain DSM 25203 / XCL-2) (Thiomicrospira crunogena).